A 145-amino-acid polypeptide reads, in one-letter code: UPF0201 protein STK_09490 (145 aa).

The protein belongs to the UPF0201 family.

This chain is UPF0201 protein STK_09490, found in Sulfurisphaera tokodaii (strain DSM 16993 / JCM 10545 / NBRC 100140 / 7) (Sulfolobus tokodaii).